We begin with the raw amino-acid sequence, 361 residues long: MLALRQGALLLSARGGQTTHDNLQLCAGPSRRPRARWISSAPRPSTLVERHIRPQASTASDATTSTSQRILSIHDVDNGQILGFGADLAEDHPGFHDPAYKQRRAWLAEMAKTHRIGTPIPDVEYSPAEVATWDAVLEELSGLLPQHACREYLRCLTLFDFRKGRVPQLEEMNTVLRSTTGWTVRPVAGLMHPRHFLAGLAFKHFHSTQYMRHPSKPSYTPEPDVVHELIGHVPLLADPAYARLIQTIGLASLAADDKQIWHLTKVYWHTVEFGVVREGDQVKAFGAGILSSYGELAHMASGAAALERLDPFRPQPRMAYKDGFQKRYFVLDSFAEGSELLSSYAASLGLPESLRGDASVA.

Residues 1–55 (MLALRQGALLLSARGGQTTHDNLQLCAGPSRRPRARWISSAPRPSTLVERHIRPQ) constitute a chloroplast transit peptide. The disordered stretch occupies residues 47–67 (LVERHIRPQASTASDATTSTS). The span at 56-67 (ASTASDATTSTS) shows a compositional bias: low complexity. Positions 227, 232, and 272 each coordinate Fe cation.

The protein belongs to the biopterin-dependent aromatic amino acid hydroxylase family. Fe(2+) is required as a cofactor.

The protein localises to the plastid. Its subcellular location is the chloroplast. The catalysed reaction is (6R)-L-erythro-5,6,7,8-tetrahydrobiopterin + L-phenylalanine + O2 = (4aS,6R)-4a-hydroxy-L-erythro-5,6,7,8-tetrahydrobiopterin + L-tyrosine. Catalyzes the hydroxylation of L-phenylalanine to L-tyrosine. Can functionally complement an Escherichia coli tyrosine auxotroph. The sequence is that of Phenylalanine 4-monooxygenase, chloroplastic from Chlamydomonas reinhardtii (Chlamydomonas smithii).